The following is a 374-amino-acid chain: O-methyltransferase acrG (374 aa).

Y19, N70, D96, S128, and F129 together coordinate S-adenosyl-L-homocysteine. F245 lines the Mg(2+) pocket.

It belongs to the methyltransferase superfamily. Type-7 methyltransferase family.

It functions in the pathway secondary metabolite biosynthesis. O-methyltransferase; part of the cluster that mediates the biosynthesis of acurin A, a highly reduced polyketide coupled to a serine via a peptide bond. The activities of the highly reducing polyketide synthase acrA and the nonribosomal peptide synthetase acrB are collectively responsible for the synthesis of the acurin A core structure with a heptaketide backbone produced by acrA covalently fused to a L-serine by acrB. After the formation of the PK-NRP hybrid product, it is detached from acrB by reductive release to set up the formation of the lactam ring by aldol condensation. The hydrolyase acrC then catalyzes water loss to generate a double bond in the ring. This double bond is probably reduced, which is followed by three oxidations at C-22 to generate the carboxylic acid moiety, involving probably the FAD-binding monooxygenase acrE and the cytochrome P450 monooxygenases acrD and acrF. Finally, a last methylation step performed by the O-methyltransferase acrG leads to the production of acurin A. This Aspergillus aculeatus (strain ATCC 16872 / CBS 172.66 / WB 5094) protein is O-methyltransferase acrG.